Reading from the N-terminus, the 760-residue chain is General transcription and DNA repair factor IIH helicase subunit XPD (760 aa).

In terms of domain architecture, Helicase ATP-binding spans 7 to 283; it reads GLLVYFPYDY…KETDEQRLRE (277 aa). Residue 42–49 coordinates ATP; sequence MPSGTGKT. The [4Fe-4S] cluster site is built by Cys116, Cys134, Cys155, and Cys190. The DEAH box motif lies at 234–237; the sequence is DEAH. The segment at 438–637 is mediates interaction with MMS19; sequence MDASLAIKPV…TQSRILKARL (200 aa). The Nuclear localization signal signature appears at 682 to 695; it reads KRFARADKRGKLPR.

The protein belongs to the helicase family. RAD3/XPD subfamily. Component of the 7-subunit TFIIH core complex composed of XPB/ERCC3, XPD/ERCC2, GTF2H1, GTF2H2, GTF2H3, GTF2H4 and GTF2H5, which is active in NER. The core complex associates with the 3-subunit CDK-activating kinase (CAK) module composed of CCNH/cyclin H, CDK7 and MNAT1 to form the 10-subunit holoenzyme (holo-TFIIH) active in transcription. The interaction with GTF2H2 results in the stimulation of the 5'--&gt;3' helicase activity. Component of the MMXD complex, which includes CIAO1, ERCC2, CIAO2B, MMS19 and SLC25A5. Interacts with CIAO1 and CIAO2B; the interaction WITH CIAO2B is direct. Interacts with ATF7IP. Interacts directly with MMS19. Part of TBP-based Pol II pre-initiation complex (PIC), in which Pol II core assembles with general transcription factors and other specific initiation factors including GTF2E1, GTF2E2, GTF2F1, GTF2F2, TCEA1, ERCC2, ERCC3, GTF2H2, GTF2H3, GTF2H4, GTF2H5, GTF2A1, GTF2A2, GTF2B and TBP; this large multi-subunit PIC complex mediates DNA unwinding and targets Pol II core to the transcription start site where the first phosphodiester bond forms. Requires Mg(2+) as cofactor. [4Fe-4S] cluster serves as cofactor. ISGylated.

It is found in the nucleus. Its subcellular location is the cytoplasm. It localises to the cytoskeleton. The protein localises to the spindle. The enzyme catalyses Couples ATP hydrolysis with the unwinding of duplex DNA at the replication fork by translocating in the 5'-3' direction. This creates two antiparallel DNA single strands (ssDNA). The leading ssDNA polymer is the template for DNA polymerase III holoenzyme which synthesizes a continuous strand.. It carries out the reaction ATP + H2O = ADP + phosphate + H(+). Its function is as follows. ATP-dependent 5'-3' DNA helicase, component of the general transcription and DNA repair factor IIH (TFIIH) core complex, which is involved in general and transcription-coupled nucleotide excision repair (NER) of damaged DNA and, when complexed to CDK-activating kinase (CAK), involved in transcription by RNA polymerase II. In NER, TFIIH acts by opening DNA around the lesion to allow the excision of the damaged oligonucleotide and its replacement by a new DNA fragment. The ATP-dependent helicase activity of XPD/ERCC2 is required for DNA opening. In transcription, TFIIH has an essential role in transcription initiation. When the pre-initiation complex (PIC) has been established, TFIIH is required for promoter opening and promoter escape. Phosphorylation of the C-terminal tail (CTD) of the largest subunit of RNA polymerase II by the kinase module CAK controls the initiation of transcription. XPD/ERCC2 acts by forming a bridge between CAK and the core-TFIIH complex. Involved in the regulation of vitamin-D receptor activity. As part of the mitotic spindle-associated MMXD complex it plays a role in chromosome segregation. Might have a role in aging process and could play a causative role in the generation of skin cancers. In Bos taurus (Bovine), this protein is General transcription and DNA repair factor IIH helicase subunit XPD (ERCC2).